The chain runs to 342 residues: Protein BMEI1586 (342 aa).

The active-site Proton acceptor is the Ser90. Substrate is bound by residues 91 to 92, Asp251, and 256 to 257; these read GS and GT.

It belongs to the proline racemase family. Homotetramer.

It carries out the reaction trans-4-hydroxy-L-proline = cis-4-hydroxy-D-proline. In terms of biological role, in vitro, catalyzes the epimerization of trans-4-hydroxy-L-proline (t4LHyp) to cis-4-hydroxy-D-proline (c4DHyp) and that of trans-3-hydroxy-L-proline (t3LHyp) to cis-3-hydroxy-D-proline (c3DHyp), albeit with very low efficiency. The physiological substrate may be different. Displays neither proline racemase activity nor t3LHyp dehydratase activity. The protein is Protein BMEI1586 of Brucella melitensis biotype 1 (strain ATCC 23456 / CCUG 17765 / NCTC 10094 / 16M).